Consider the following 977-residue polypeptide: Bifunctional glutamine synthetase adenylyltransferase/adenylyl-removing enzyme (977 aa).

The tract at residues 1-457 is adenylyl removase; that stretch reads MRLPLPSDLP…HFRQVIADPD (457 aa). Residues 468–977 are adenylyl transferase; that stretch reads GGEWSPLWEQ…RRIWGELGLS (510 aa).

This sequence belongs to the GlnE family. Requires Mg(2+) as cofactor.

It carries out the reaction [glutamine synthetase]-O(4)-(5'-adenylyl)-L-tyrosine + phosphate = [glutamine synthetase]-L-tyrosine + ADP. The enzyme catalyses [glutamine synthetase]-L-tyrosine + ATP = [glutamine synthetase]-O(4)-(5'-adenylyl)-L-tyrosine + diphosphate. Functionally, involved in the regulation of glutamine synthetase GlnA, a key enzyme in the process to assimilate ammonia. When cellular nitrogen levels are high, the C-terminal adenylyl transferase (AT) inactivates GlnA by covalent transfer of an adenylyl group from ATP to specific tyrosine residue of GlnA, thus reducing its activity. Conversely, when nitrogen levels are low, the N-terminal adenylyl removase (AR) activates GlnA by removing the adenylyl group by phosphorolysis, increasing its activity. The regulatory region of GlnE binds the signal transduction protein PII (GlnB) which indicates the nitrogen status of the cell. The polypeptide is Bifunctional glutamine synthetase adenylyltransferase/adenylyl-removing enzyme (Pseudomonas putida (strain ATCC 47054 / DSM 6125 / CFBP 8728 / NCIMB 11950 / KT2440)).